The primary structure comprises 193 residues: Thioredoxin M4, chloroplastic (193 aa).

Residues 1–82 (MASLLDSVTV…RIACEAQDTT (82 aa)) constitute a chloroplast transit peptide. The Thioredoxin domain occupies 83–192 (AAAVEVPNLS…LEKTIERFLV (110 aa)). Active-site nucleophile residues include Cys116 and Cys119. A disulfide bond links Cys116 and Cys119.

This sequence belongs to the thioredoxin family. Plant M-type subfamily.

The protein localises to the plastid. It localises to the chloroplast stroma. In terms of biological role, thiol-disulfide oxidoreductase involved in the redox regulation of enzyme of the oxidative pentose phosphate pathway. Under reducing conditions, inhibits the glucose-6-phosphate dehydrogenase. This Arabidopsis thaliana (Mouse-ear cress) protein is Thioredoxin M4, chloroplastic.